A 755-amino-acid chain; its full sequence is 3-isopropylmalate dehydratase (755 aa).

Cys353, Cys413, and Cys416 together coordinate [4Fe-4S] cluster. Disordered stretches follow at residues 427–446, 471–493, and 510–529; these read GERCASTSNRNFEGRQGAGG, LTPAQQDRPASPTPKKIETELEP, and DAPATGASPPSPAPSDAAGM. The span at 510–528 shows a compositional bias: low complexity; sequence DAPATGASPPSPAPSDAAG.

It belongs to the aconitase/IPM isomerase family. As to quaternary structure, monomer. It depends on [4Fe-4S] cluster as a cofactor.

The catalysed reaction is (2R,3S)-3-isopropylmalate = (2S)-2-isopropylmalate. It functions in the pathway amino-acid biosynthesis; L-leucine biosynthesis; L-leucine from 3-methyl-2-oxobutanoate: step 2/4. Catalyzes the isomerization between 2-isopropylmalate and 3-isopropylmalate, via the formation of 2-isopropylmaleate. The protein is 3-isopropylmalate dehydratase (LEUA) of Rhizomucor pusillus.